We begin with the raw amino-acid sequence, 261 residues long: Hydroxyethylthiazole kinase (261 aa).

Methionine 40 provides a ligand contact to substrate. 2 residues coordinate ATP: lysine 116 and threonine 162. Glycine 189 lines the substrate pocket.

This sequence belongs to the Thz kinase family. It depends on Mg(2+) as a cofactor.

It carries out the reaction 5-(2-hydroxyethyl)-4-methylthiazole + ATP = 4-methyl-5-(2-phosphooxyethyl)-thiazole + ADP + H(+). Its pathway is cofactor biosynthesis; thiamine diphosphate biosynthesis; 4-methyl-5-(2-phosphoethyl)-thiazole from 5-(2-hydroxyethyl)-4-methylthiazole: step 1/1. Functionally, catalyzes the phosphorylation of the hydroxyl group of 4-methyl-5-beta-hydroxyethylthiazole (THZ). In Methanosarcina mazei (strain ATCC BAA-159 / DSM 3647 / Goe1 / Go1 / JCM 11833 / OCM 88) (Methanosarcina frisia), this protein is Hydroxyethylthiazole kinase.